The chain runs to 626 residues: MGKTKLKPVEDVNSEVVDEVEKAEEVEEQRNDREQEEEQKEEEAPKSFEELGLDSRLIRALTKKGIEKPTLIQQSAIPYILEGKDVVARAKTGSGKTLAYLLPLLQKLFSADSVSKKKLAPSAFILVPSRELCQQVYTEVSSLIELCRVQLKAVQLTSSMSASDMRNALAGLPEILVSTPACIPKCFAAGVLEPTAVSESLSILVLDEADLLLSYGYEDNLRSVTSIIPRRCQCLLMSATTSSDVEKLKKLILHNPIVLTLTEDNDKEEAVPSNVQQFWISCSAQDKLLHILALLKLEVVQKKILIFINTIDMGFRLKLFLEKFGIKSAILNGELPQNSRLHILEQFNAGLFDYLIATDDNSQTKKQKEEAKGEANKENKKNNKRSKPKLDAEFGVVRGIDFKKVHTVINFDMPQSVTGYIHRIGRTGRAYSSGSSVSLISPDEMEGFEDIKSFLASDKNKDIDIITPFPLLTENAVESLRYRAEDVAKSVTKIAVRESRAQDLRNEIINSEKLKAHFEANPRDLDLLRHDKPLSKTAPAPHLKDIPEYLVDAKTQEASKMVKLARAAMGNTRRSGGGGGRNNKNKKRSRKGSDPLKTFNPNGSKRGAVGQKDGKDSSSTKKQKTV.

Residues 1–48 are disordered; it reads MGKTKLKPVEDVNSEVVDEVEKAEEVEEQRNDREQEEEQKEEEAPKSF. A coiled-coil region spans residues 9–47; it reads VEDVNSEVVDEVEKAEEVEEQRNDREQEEEQKEEEAPKS. Residues 12 to 27 show a composition bias toward acidic residues; that stretch reads VNSEVVDEVEKAEEVE. The Q motif signature appears at 46–74; the sequence is KSFEELGLDSRLIRALTKKGIEKPTLIQQ. In terms of domain architecture, Helicase ATP-binding spans 77–259; the sequence is IPYILEGKDV…KLILHNPIVL (183 aa). Position 90–97 (90–97) interacts with ATP; that stretch reads AKTGSGKT. The short motif at 207 to 210 is the DEAD box element; that stretch reads DEAD. Positions 293–477 constitute a Helicase C-terminal domain; sequence ALLKLEVVQK…PFPLLTENAV (185 aa). The stretch at 356 to 385 forms a coiled coil; sequence IATDDNSQTKKQKEEAKGEANKENKKNNKR. A compositionally biased stretch (basic and acidic residues) spans 363-381; it reads QTKKQKEEAKGEANKENKK. 2 disordered regions span residues 363–388 and 568–626; these read QTKK…RSKP and AMGN…QKTV.

It belongs to the DEAD box helicase family. DDX56/DBP9 subfamily.

The enzyme catalyses ATP + H2O = ADP + phosphate + H(+). This Arabidopsis thaliana (Mouse-ear cress) protein is DEAD-box ATP-dependent RNA helicase 16 (RH16).